A 192-amino-acid polypeptide reads, in one-letter code: Rho-related protein racC (192 aa).

GTP is bound at residue 13 to 20; sequence GDGAVGKT. The Effector region signature appears at 35–43; the sequence is YIPTVFDNY. GTP-binding positions include 60 to 64 and 118 to 121; these read DTAGQ and TKLD. A Cysteine methyl ester modification is found at C189. C189 carries the S-geranylgeranyl cysteine lipid modification. A propeptide spans 190 to 192 (removed in mature form); it reads IVM.

It belongs to the small GTPase superfamily. Rho family. In terms of assembly, interacts with pakB.

The protein resides in the cell membrane. In Dictyostelium discoideum (Social amoeba), this protein is Rho-related protein racC (racC).